The following is a 367-amino-acid chain: Putative methylthioribose-1-phosphate isomerase (367 aa).

Substrate-binding positions include 65 to 67 (RGA), Arg-106, and Gln-218. The active-site Proton donor is Asp-259. Residue 269–270 (NK) coordinates substrate.

The protein belongs to the eIF-2B alpha/beta/delta subunits family. MtnA subfamily.

The catalysed reaction is 5-(methylsulfanyl)-alpha-D-ribose 1-phosphate = 5-(methylsulfanyl)-D-ribulose 1-phosphate. Its function is as follows. Catalyzes the interconversion of methylthioribose-1-phosphate (MTR-1-P) into methylthioribulose-1-phosphate (MTRu-1-P). This chain is Putative methylthioribose-1-phosphate isomerase, found in Sulfolobus acidocaldarius (strain ATCC 33909 / DSM 639 / JCM 8929 / NBRC 15157 / NCIMB 11770).